The following is a 1121-amino-acid chain: Phytochrome 2 (1121 aa).

In terms of domain architecture, GAF spans Asp-214–Val-393. Cys-319 contacts phytochromobilin. 2 consecutive PAS domains span residues Val-608 to Glu-679 and Asp-742 to Met-813. One can recognise a Histidine kinase domain in the interval Tyr-893–Gln-1113.

It belongs to the phytochrome family. As to quaternary structure, homodimer. Contains one covalently linked phytochromobilin chromophore.

Functionally, regulatory photoreceptor which exists in two forms that are reversibly interconvertible by light: the Pr form that absorbs maximally in the red region of the spectrum and the Pfr form that absorbs maximally in the far-red region. Photoconversion of Pr to Pfr induces an array of morphogenic responses, whereas reconversion of Pfr to Pr cancels the induction of those responses. Pfr controls the expression of a number of nuclear genes including those encoding the small subunit of ribulose-bisphosphate carboxylase, chlorophyll A/B binding protein, protochlorophyllide reductase, rRNA, etc. It also controls the expression of its own gene(s) in a negative feedback fashion. In Ceratodon purpureus (Fire moss), this protein is Phytochrome 2 (PHY2).